The chain runs to 328 residues: MTQRVVSIVGPTASGKTGLGIAIARRLAEAGERAEIVNADAYQMYRGMDIGTAKPTAEEQAAVPHHLIDIIDPEDTMSVARFQQLARETIADLQSRGIRPILVGGSGLYARAAIDDITFPGTDPDVRTRLEEREKTEGAGALFDELRAKDPEAAARMDPRNPRRTIRALEVIELTGKPYSASLPRYRYVIPSVQIGLDLDRPDLDHRIDLRTKQMYDDGFIEEVERLRPHLGATAVRALGYQQIIDLLDGIWDVNDAFADIAQKTKRLARKQMGWFGRDPRIHWLQALNPKLVDNAMAIIAHADAGDYDPIDARADEYTQHHLGDITA.

10–17 contacts ATP; sequence GPTASGKT. 12–17 contacts substrate; the sequence is TASGKT.

The protein belongs to the IPP transferase family. As to quaternary structure, monomer. It depends on Mg(2+) as a cofactor.

It catalyses the reaction adenosine(37) in tRNA + dimethylallyl diphosphate = N(6)-dimethylallyladenosine(37) in tRNA + diphosphate. Functionally, catalyzes the transfer of a dimethylallyl group onto the adenine at position 37 in tRNAs that read codons beginning with uridine, leading to the formation of N6-(dimethylallyl)adenosine (i(6)A). The polypeptide is tRNA dimethylallyltransferase (Bifidobacterium longum (strain NCC 2705)).